We begin with the raw amino-acid sequence, 74 residues long: UPF0270 protein NT01EI_3666 (74 aa).

The protein belongs to the UPF0270 family.

In Edwardsiella ictaluri (strain 93-146), this protein is UPF0270 protein NT01EI_3666.